Here is a 749-residue protein sequence, read N- to C-terminus: Phosphate-regulating neutral endopeptidase PHEX (749 aa).

Residues 1–20 lie on the Cytoplasmic side of the membrane; the sequence is MEAETGSSVETGKKANRGTR. Residues 21–41 form a helical; Signal-anchor for type II membrane protein membrane-spanning segment; it reads IALVVFVGGTLVLGTILFLVS. Topologically, residues 42–641 are extracellular; it reads QGLLSLQAKQ…LNVKGKRTLG (600 aa). A Peptidase M13 domain is found at 53-749; sequence YCLKPECIEA…NRGMDSCRLW (697 aa). Residues C54 and C59 are joined by a disulfide bond. N-linked (GlcNAc...) asparagine glycosylation is found at N71, N238, N263, N290, N301, N377, and N484. Disulfide bonds link C77/C733, C85/C693, C142/C406, and C617/C746. H580 contributes to the Zn(2+) binding site. The active site involves E581. Zn(2+) is bound by residues H584 and E642. D646 acts as the Proton donor in catalysis. N-linked (GlcNAc...) asparagine glycosylation is present at N736.

This sequence belongs to the peptidase M13 family. In terms of assembly, interacts with MEPE; the interaction is zinc-dependent (via ASARM motif). Zn(2+) is required as a cofactor. In terms of tissue distribution, specifically expressed in ovary. Expressed at low levels in kidney.

It is found in the cell membrane. Its function is as follows. Peptidase that cleaves SIBLING (small integrin-binding ligand, N-linked glycoprotein)-derived ASARM peptides, thus regulating their biological activity. Cleaves ASARM peptides between Ser and Glu or Asp residues. Regulates osteogenic cell differentiation and bone mineralization through the cleavage of the MEPE-derived ASARM peptide. Promotes dentin mineralization and renal phosphate reabsorption by cleaving DMP1- and MEPE-derived ASARM peptides. Inhibits the cleavage of MEPE by CTSB/cathepsin B thus preventing MEPE degradation. In Homo sapiens (Human), this protein is Phosphate-regulating neutral endopeptidase PHEX (PHEX).